The chain runs to 614 residues: Leucine aminopeptidase 2 (614 aa).

A peptide-binding positions include 139-141 and 271-276; these read QCQ and PYGGME. Position 300 (His-300) interacts with Zn(2+). Glu-301 functions as the Proton acceptor in the catalytic mechanism. Residues His-304 and Glu-323 each contribute to the Zn(2+) site. Residue Tyr-385 is the Proton donor of the active site.

It belongs to the peptidase M1 family. The cofactor is Zn(2+).

The protein localises to the cytoplasm. The protein resides in the nucleus. The enzyme catalyses an epoxide + H2O = an ethanediol. Functionally, aminopeptidase that preferentially cleaves di- and tripeptides. Also has low epoxide hydrolase activity (in vitro). Can hydrolyze the epoxide leukotriene LTA(4) but it forms preferentially 5,6-dihydroxy-7,9,11,14-eicosatetraenoic acid rather than the cytokine leukotriene B(4) as the product compared to the homologous mammalian enzyme (in vitro). The sequence is that of Leucine aminopeptidase 2 from Aspergillus fumigatus (strain ATCC MYA-4609 / CBS 101355 / FGSC A1100 / Af293) (Neosartorya fumigata).